Consider the following 125-residue polypeptide: C-X-C motif chemokine 9 (125 aa).

The signal sequence occupies residues 1–21 (MKKSAPLFLGIIFLTLTGVQG). Cystine bridges form between cysteine 30-cysteine 57 and cysteine 32-cysteine 73. Positions 91–125 (QVNQKKKQRKGKKYKKTKKVPKVKRSQRPSQKKTT) are disordered. Residues 93-125 (NQKKKQRKGKKYKKTKKVPKVKRSQRPSQKKTT) show a composition bias toward basic residues.

It belongs to the intercrine alpha (chemokine CxC) family.

The protein localises to the secreted. Its function is as follows. Cytokine that affects the growth, movement, or activation state of cells that participate in immune and inflammatory response. Chemotactic for activated T-cells. Binds to CXCR3. The polypeptide is C-X-C motif chemokine 9 (CXCL9) (Bos taurus (Bovine)).